The chain runs to 199 residues: NAD(P)H dehydrogenase (quinone) (199 aa).

In terms of domain architecture, Flavodoxin-like spans 4-190; sequence VLVLYYSMYG…AIARFQGKHV (187 aa). FMN-binding positions include 10 to 15 and 79 to 81; these read SMYGHI and TRF. Tyr-12 contacts NAD(+). Residue Trp-99 coordinates substrate. FMN contacts are provided by residues 114–119 and His-134; that span reads STGTGG.

Belongs to the WrbA family. FMN is required as a cofactor.

It carries out the reaction a quinone + NADH + H(+) = a quinol + NAD(+). The catalysed reaction is a quinone + NADPH + H(+) = a quinol + NADP(+). The polypeptide is NAD(P)H dehydrogenase (quinone) (Marinobacter nauticus (strain ATCC 700491 / DSM 11845 / VT8) (Marinobacter aquaeolei)).